Consider the following 512-residue polypeptide: 2,3-bisphosphoglycerate-independent phosphoglycerate mutase (512 aa).

Aspartate 14 and serine 64 together coordinate Mn(2+). The Phosphoserine intermediate role is filled by serine 64. Substrate is bound by residues histidine 125, 155-156 (RD), arginine 187, arginine 193, 259-262 (RADR), and lysine 332. Aspartate 399, histidine 403, aspartate 440, histidine 441, and histidine 459 together coordinate Mn(2+).

Belongs to the BPG-independent phosphoglycerate mutase family. Monomer. It depends on Mn(2+) as a cofactor.

It catalyses the reaction (2R)-2-phosphoglycerate = (2R)-3-phosphoglycerate. Its pathway is carbohydrate degradation; glycolysis; pyruvate from D-glyceraldehyde 3-phosphate: step 3/5. In terms of biological role, catalyzes the interconversion of 2-phosphoglycerate and 3-phosphoglycerate. The chain is 2,3-bisphosphoglycerate-independent phosphoglycerate mutase from Vesicomyosocius okutanii subsp. Calyptogena okutanii (strain HA).